The chain runs to 234 residues: Fibroblast growth factor-binding protein 1 (234 aa).

Residues 1–23 form the signal peptide; that stretch reads MRTHGLTLLSLLLLAVPMLLVEA. The segment at 25-59 is disordered; that stretch reads KEGRNRRGSKASADESLALGKPGKEPRSQPTNYPI. Cystine bridges form between Cys71/Cys88, Cys97/Cys130, and Cys106/Cys142. Asn155 carries N-linked (GlcNAc...) asparagine glycosylation. A disordered region spans residues 169–200; it reads MEPSPMDTVEVTTSSSPEKTQTMATKDPQCEE. O-linked (GalNAc...) serine glycosylation occurs at Ser172. Positions 178-192 are enriched in polar residues; sequence EVTTSSSPEKTQTMA. The sufficient for interaction with FGF2 and FGF2-induced effects stretch occupies residues 194–234; that stretch reads KDPQCEEEDLKNQRKAALEYCGETWGSLCNFFLSMVQGSSC. 2 cysteine pairs are disulfide-bonded: Cys198/Cys234 and Cys214/Cys222.

It belongs to the fibroblast growth factor-binding protein family. In terms of assembly, found in a complex with FGFBP1, FGF1 and FGF2. Interacts with FGF1, FGF7, FGF10, FGF22 and HSPG2. Interacts with FGF2.

The protein localises to the secreted. The protein resides in the extracellular space. It is found in the cell membrane. Its function is as follows. Acts as a carrier protein that release fibroblast-binding factors (FGFs) from the extracellular matrix (EM) storage and thus enhance the mitogenic activity of FGFs. Enhances FGF2 signaling during tissue repair, angiogenesis and in tumor growth. The protein is Fibroblast growth factor-binding protein 1 (FGFBP1) of Bos taurus (Bovine).